The following is a 102-amino-acid chain: Large ribosomal subunit protein bL21 (102 aa).

The protein belongs to the bacterial ribosomal protein bL21 family. As to quaternary structure, part of the 50S ribosomal subunit. Contacts protein L20.

This protein binds to 23S rRNA in the presence of protein L20. This Staphylococcus aureus protein is Large ribosomal subunit protein bL21.